Consider the following 1030-residue polypeptide: Translation initiation factor IF-2 (1030 aa).

Composition is skewed to low complexity over residues Ala56–Ser69 and Pro111–Lys132. 2 disordered regions span residues Ala56–Gln361 and Ser394–Lys434. Basic and acidic residues predominate over residues Ala134–Glu144. Residues Ala154–Ser164 are compositionally biased toward low complexity. The segment covering Leu188–Ser206 has biased composition (basic and acidic residues). Residues Val259 to Val273 are compositionally biased toward low complexity. The tr-type G domain maps to Thr522–Val695. Residues Gly531–Thr538 are G1. Gly531–Thr538 contacts GTP. The G2 stretch occupies residues Gly556–His560. The segment at Asp581–Gly584 is G3. GTP contacts are provided by residues Asp581–His585 and Asn635–Asp638. The tract at residues Asn635–Asp638 is G4. The interval Ser671–Ile673 is G5.

It belongs to the TRAFAC class translation factor GTPase superfamily. Classic translation factor GTPase family. IF-2 subfamily.

It is found in the cytoplasm. In terms of biological role, one of the essential components for the initiation of protein synthesis. Protects formylmethionyl-tRNA from spontaneous hydrolysis and promotes its binding to the 30S ribosomal subunits. Also involved in the hydrolysis of GTP during the formation of the 70S ribosomal complex. In Synechococcus elongatus (strain ATCC 33912 / PCC 7942 / FACHB-805) (Anacystis nidulans R2), this protein is Translation initiation factor IF-2.